We begin with the raw amino-acid sequence, 435 residues long: MFSPDTNSEFYDDFYTKYNTNMAPTTSTFNAQPRLSLDSGLGLTNDSFYSTDLNETHLMDISAGNASTSFQSQPPPQLESSPPTKWARIRTPPNRKKKISHEGPNQEALPPGFNLFSPPSRKKIKTAFSSPPPKSMKTPDSLRKSIRISSPSPFKVTFSKTPLKLSNNENVTGIHIGRSGTYYNKQVTGSASKRCLLPSKPDGFTFLGSPGNSDVLDFPLQTTFEGFGDLDTPAKINAALEVNNDDSMDYYQYAGMIETSSSLATYTNSTGPLVENHARNLKSVPISRTASRNLMKISRKSVEEPVPEPQAVHVEPVIEKPTKISAKKEKEQKKSAAKEAALKEAKEKEMRIWKLAPFETPKKEVPLYSGRWLVISTGRTLAQQELFSDAKSFFKANPPPAPRAPQAPELASGPRRIPTIQRVTLFKHRYRSPRD.

A disordered region spans residues 65-146 (NASTSFQSQP…KTPDSLRKSI (82 aa)). Residues 322 to 352 (TKISAKKEKEQKKSAAKEAALKEAKEKEMRI) are a coiled coil. Residues 393 to 419 (FFKANPPPAPRAPQAPELASGPRRIPT) are disordered.

Strongly expressed in the cytoplasm of the pharynx muscle cells and several head neurons, probably the IL1s or IL2s, throughout development. Also expressed in some other unidentified neurons in the tail region. Weakly expressed in the nuclei of the T-cells and the T-cell daughters. Not expressed in gonads and in P12 cell.

It localises to the nucleus. It is found in the cytoplasm. Its function is as follows. May act synergistically with the Wnt pathways to control T-cell fate specification, gonad development, and P12 cell fate specification. Required for the distribution of pop-1 and tlp-1 proteins. In Caenorhabditis elegans, this protein is T-cell defective protein 2 (tcl-2).